The following is a 351-amino-acid chain: Dysbindin (351 aa).

Residues 106-179 (FLADLECLTA…AELDAEHAQK (74 aa)) adopt a coiled-coil conformation. The segment at 291 to 325 (RHKLSSLSSTCTDSASQEASEGESPVVQSDEEEVQ) is disordered. Residues 295-306 (SSLSSTCTDSAS) show a composition bias toward low complexity.

Belongs to the dysbindin family. Component of the biogenesis of lysosome-related organelles complex 1 (BLOC-1).

It localises to the cytoplasm. The protein localises to the cytoplasmic vesicle membrane. Its subcellular location is the cytoplasmic vesicle. The protein resides in the secretory vesicle. It is found in the synaptic vesicle membrane. It localises to the endosome membrane. The protein localises to the melanosome membrane. Its subcellular location is the nucleus. The protein resides in the postsynaptic density. It is found in the endoplasmic reticulum. Component of the BLOC-1 complex, a complex that is required for normal biogenesis of lysosome-related organelles (LRO), such as platelet dense granules and melanosomes. Plays a role in intracellular vesicle trafficking. Plays a role in synaptic vesicle trafficking and in neurotransmitter release. May be required for normal dopamine homeostasis in the cerebral cortex, hippocampus, and hypothalamus. Plays a role in the regulation of cell surface exposure of DRD2. Contributes to the regulation of dopamine signaling. May play a role in actin cytoskeleton reorganization and neurite outgrowth. The protein is Dysbindin (DTNBP1) of Gallus gallus (Chicken).